A 258-amino-acid chain; its full sequence is NAD kinase (258 aa).

Asp51 acts as the Proton acceptor in catalysis. Residues 51–52, Lys56, 119–120, Lys130, Asp149, 160–165, and Ala184 each bind NAD(+); these read DG, ND, and TAYSLS.

This sequence belongs to the NAD kinase family. A divalent metal cation serves as cofactor.

Its subcellular location is the cytoplasm. It catalyses the reaction NAD(+) + ATP = ADP + NADP(+) + H(+). Functionally, involved in the regulation of the intracellular balance of NAD and NADP, and is a key enzyme in the biosynthesis of NADP. Catalyzes specifically the phosphorylation on 2'-hydroxyl of the adenosine moiety of NAD to yield NADP. The polypeptide is NAD kinase (Thermotoga sp. (strain RQ2)).